The sequence spans 256 residues: Ribosomal RNA large subunit methyltransferase E (256 aa).

Gly-50, Trp-52, Asp-69, Asp-85, and Asp-108 together coordinate S-adenosyl-L-methionine. Lys-148 acts as the Proton acceptor in catalysis. A TRAM domain is found at 195 to 253; the sequence is SLRKGDVVDVTIDAMGKTGDGIAHVDDFVVFVKGGSVGDKLKIKITDVKPSFAFADIVE.

This sequence belongs to the class I-like SAM-binding methyltransferase superfamily. RNA methyltransferase RlmE family.

It is found in the cytoplasm. It catalyses the reaction uridine(2552) in 23S rRNA + S-adenosyl-L-methionine = 2'-O-methyluridine(2552) in 23S rRNA + S-adenosyl-L-homocysteine + H(+). Specifically methylates the uridine in position 2552 of 23S rRNA at the 2'-O position of the ribose in the fully assembled 50S ribosomal subunit. The sequence is that of Ribosomal RNA large subunit methyltransferase E from Methanocella arvoryzae (strain DSM 22066 / NBRC 105507 / MRE50).